The following is a 675-amino-acid chain: Transmembrane protein 232 (675 aa).

The chain crosses the membrane as a helical span at residues 163 to 183 (LVKIGYLIFLRLFVFFLHGHL). Residues 598–634 (WQKDMEARKREEEAYKAQNQKDKEEKEKIHFQEIMKQ) adopt a coiled-coil conformation. The segment at 605–624 (RKREEEAYKAQNQKDKEEKE) is disordered.

High expression in the testis and weak expression levels in the spleen, liver, brain, uterus, lung, epididymis and kidney. Not detected in the heart or ovary.

The protein resides in the membrane. In terms of biological role, plays a critical role for male fertility and sperm motility by regulating sperm cytoplasm removal and maintaining axoneme integrity. The polypeptide is Transmembrane protein 232 (Tmem232) (Mus musculus (Mouse)).